Reading from the N-terminus, the 79-residue chain is Sulfur carrier protein TusA (79 aa).

The active-site Cysteine persulfide intermediate is Cys17.

This sequence belongs to the sulfur carrier protein TusA family.

The protein resides in the cytoplasm. Functionally, sulfur carrier protein which probably makes part of a sulfur-relay system. This is Sulfur carrier protein TusA from Idiomarina loihiensis (strain ATCC BAA-735 / DSM 15497 / L2-TR).